A 609-amino-acid polypeptide reads, in one-letter code: X-ray repair cross-complementing protein 6 (609 aa).

Residues 1 to 28 form a disordered region; it reads MSGWESYYKTEGDEEAEEEQEENLEASG. N-acetylserine is present on Ser2. At Ser2 the chain carries Phosphoserine. The residue at position 6 (Ser6) is a Phosphoserine; by PRKDC. A compositionally biased stretch (acidic residues) spans 12-24; sequence GDEEAEEEQEENL. Ser27 is modified (phosphoserine). Lys31 serves as the catalytic Schiff-base intermediate with DNA; for 5'-deoxyribose-5-phosphate lyase activity. Residue Lys31 is modified to N6-acetyllysine. A Phosphoserine; by PRKDC modification is found at Ser51. The 208-residue stretch at 261-468 folds into the Ku domain; sequence LKLNKDIVIS…VGKMKAIVEK (208 aa). The DNA-binding stretch occupies residues 277-341; the sequence is VQKALKPPPI…EETEELKRFD (65 aa). Lys287 is covalently cross-linked (Glycyl lysine isopeptide (Lys-Gly) (interchain with G-Cter in SUMO2)). Position 306 is a phosphoserine (Ser306). N6-acetyllysine occurs at positions 317, 331, and 338. Lys317 is covalently cross-linked (Glycyl lysine isopeptide (Lys-Gly) (interchain with G-Cter in SUMO2)). The tract at residues 373–482 is interaction with XRCC5; sequence SLVIGSSTLF…YRSDSFENPV (110 aa). Thr455 is subject to Phosphothreonine. Residue Lys461 is modified to N6-acetyllysine. 2 positions are modified to phosphoserine: Ser477 and Ser520. The disordered stretch occupies residues 536 to 562; it reads PEGKVTKRKHDNEGSGSKRPKVEYSEE. N6-acetyllysine occurs at positions 539, 542, and 544. Position 550 is a phosphoserine (Ser550). The tract at residues 550-609 is interaction with DEAF1; sequence SGSKRPKVEYSEEELKTHISKGTLGKFTVPMLKEACRAYGLKSGLKKQELLEALTKHFQD. Residues Lys553 and Lys556 each carry the N6-acetyllysine modification. Residue Lys556 forms a Glycyl lysine isopeptide (Lys-Gly) (interchain with G-Cter in SUMO2) linkage. Ser560 is subject to Phosphoserine. Residue Lys570 is modified to N6,N6,N6-trimethyllysine. The region spanning 573-607 is the SAP domain; that stretch reads LGKFTVPMLKEACRAYGLKSGLKKQELLEALTKHF. The interaction with BAX stretch occupies residues 578–583; that stretch reads VPMLKE.

Belongs to the ku70 family. Forms a heterodimer with XRCC5/Ku80; heterodimerization stabilizes XRCC5 protein. Component of the core long-range non-homologous end joining (NHEJ) complex (also named DNA-PK complex) composed of PRKDC, LIG4, XRCC4, XRCC6/Ku70, XRCC5/Ku86 and NHEJ1/XLF. Additional component of the NHEJ complex includes PAXX. Following autophosphorylation, PRKDC dissociates from DNA, leading to formation of the short-range NHEJ complex, composed of LIG4, XRCC4, XRCC6/Ku70, XRCC5/Ku86 and NHEJ1/XLF. The XRCC5-XRCC6 dimer also associates with NAA15, and this complex binds to the osteocalcin promoter and activates osteocalcin expression. In addition, XRCC6 interacts with the osteoblast-specific transcription factors MSX2, RUNX2 and DLX5. Interacts with ELF3. Interacts with ATP23. The XRCC5-XRRC6 dimer associates in a DNA-dependent manner with APEX1. Binds to CDK9 isoform 2. Identified in a complex with DEAF1 and XRCC5. Interacts with DEAF1 (via the SAND domain); the interaction is direct and may be inhibited by DNA-binding. Interacts with CLU. Interacts with NR4A3; the DNA-dependent protein kinase complex DNA-PK phosphorylates and activates NR4A3 and prevents NR4A3 ubiquitinylation and degradation. Interacts with CYREN isoform 1 (CYREN-1) and isoform 4 (CYREN-2) (via KBM motif). Interacts (via N-terminus) with HSF1 (via N-terminus); this interaction is direct and prevents XRCC5/XRCC6 heterodimeric binding and non-homologous end joining (NHEJ) repair activities induced by ionizing radiation (IR). Part of the HDP-RNP complex composed of at least HEXIM1, PRKDC, XRCC5, XRCC6, paraspeckle proteins (SFPQ, NONO, PSPC1, RBM14, and MATR3) and NEAT1 RNA. Interacts with HMBOX1. Interacts with ATF7. Interacts with APLF (via KBM motif). Interacts with WRN (via KBM motif). The XRCC5-XRCC6 dimer associates with ALKBH2. Interacts with TPRN; TPRN interacts with a number of DNA damage response proteins, is recruited to sites of DNA damage and may play a role in DNA damage repair. When not acetylated, interacts with BAX. Interacts with ERCC6L2. In terms of assembly, (Microbial infection) Interacts with human T-cell leukemia virus 1/HTLV-1 protein HBZ. Phosphorylation by PRKDC may enhance helicase activity. Phosphorylation of Ser-51 does not affect DNA repair. In terms of processing, ADP-ribosylated by PARP3. Post-translationally, methylation by SETD4 leads to accumulation in the cytoplasm and is a prerequisite for acetylation, possibly due to the change of subcellular from the nucleus to the cytosol initiated by methylation, acetylation occurring in the cytosol. Acetylation can be catalyzed in vitro by CREBBP/CBP and KAT2B/PCAF.

The protein resides in the nucleus. It is found in the chromosome. Its subcellular location is the cytoplasm. Functionally, single-stranded DNA-dependent ATP-dependent helicase that plays a key role in DNA non-homologous end joining (NHEJ) by recruiting DNA-PK to DNA. Required for double-strand break repair and V(D)J recombination. Also has a role in chromosome translocation. Has a role in chromosome translocation. The DNA helicase II complex binds preferentially to fork-like ends of double-stranded DNA in a cell cycle-dependent manner. It works in the 3'-5' direction. During NHEJ, the XRCC5-XRRC6 dimer performs the recognition step: it recognizes and binds to the broken ends of the DNA and protects them from further resection. Binding to DNA may be mediated by XRCC6. The XRCC5-XRRC6 dimer acts as a regulatory subunit of the DNA-dependent protein kinase complex DNA-PK by increasing the affinity of the catalytic subunit PRKDC to DNA by 100-fold. The XRCC5-XRRC6 dimer is probably involved in stabilizing broken DNA ends and bringing them together. The assembly of the DNA-PK complex to DNA ends is required for the NHEJ ligation step. Probably also acts as a 5'-deoxyribose-5-phosphate lyase (5'-dRP lyase), by catalyzing the beta-elimination of the 5' deoxyribose-5-phosphate at an abasic site near double-strand breaks. 5'-dRP lyase activity allows to 'clean' the termini of abasic sites, a class of nucleotide damage commonly associated with strand breaks, before such broken ends can be joined. The XRCC5-XRRC6 dimer together with APEX1 acts as a negative regulator of transcription. In association with NAA15, the XRCC5-XRRC6 dimer binds to the osteocalcin promoter and activates osteocalcin expression. Plays a role in the regulation of DNA virus-mediated innate immune response by assembling into the HDP-RNP complex, a complex that serves as a platform for IRF3 phosphorylation and subsequent innate immune response activation through the cGAS-STING pathway. Negatively regulates apoptosis by interacting with BAX and sequestering it from the mitochondria. Might have deubiquitination activity, acting on BAX. This Homo sapiens (Human) protein is X-ray repair cross-complementing protein 6 (XRCC6).